The sequence spans 143 residues: WW domain-containing protein C660.05 (143 aa).

Residues 9–44 enclose the WW domain; that stretch reads GLPAGWVAQWDPTYQAYFYINETFEGAQPQWEPPIP. The tract at residues 115 to 143 is disordered; sequence HHGPLHGPHGGFGGRGGGRMGGRGGRGRR.

The protein is WW domain-containing protein C660.05 of Schizosaccharomyces pombe (strain 972 / ATCC 24843) (Fission yeast).